Consider the following 326-residue polypeptide: Interleukin-1-binding protein (326 aa).

An N-terminal signal peptide occupies residues 1 to 18 (MSILPVIFLSIFFYSSFV). Ig-like domains are found at residues 24 to 115 (PECI…LNLT), 122 to 212 (SNID…RIVK), and 221 to 322 (PSTM…KTVT). Cys48 and Cys99 form a disulfide bridge. N-linked (GlcNAc...) asparagine; by host glycans are attached at residues Asn80, Asn103, and Asn113. A disulfide bridge connects residues Cys143 and Cys194. N-linked (GlcNAc...) asparagine; by host glycans are attached at residues Asn206 and Asn237. An intrachain disulfide couples Cys242 to Cys309.

The protein belongs to the interleukin-1 receptor family. In terms of assembly, interacts with mouse Il1b.

The protein resides in the secreted. May reduce the host inflammatory response by interacting with inteleukin-1 beta (Il1b) and thus decreasing the association between IL1B and its cellular receptor. In Vaccinia virus (strain Ankara) (VACV), this protein is Interleukin-1-binding protein (OPG201).